Here is a 463-residue protein sequence, read N- to C-terminus: ATP-dependent protease ATPase subunit HslU (463 aa).

ATP-binding positions include Val21, 63 to 68 (GVGKTE), Asp276, Glu341, and Arg413.

This sequence belongs to the ClpX chaperone family. HslU subfamily. As to quaternary structure, a double ring-shaped homohexamer of HslV is capped on each side by a ring-shaped HslU homohexamer. The assembly of the HslU/HslV complex is dependent on binding of ATP.

The protein localises to the cytoplasm. Functionally, ATPase subunit of a proteasome-like degradation complex; this subunit has chaperone activity. The binding of ATP and its subsequent hydrolysis by HslU are essential for unfolding of protein substrates subsequently hydrolyzed by HslV. HslU recognizes the N-terminal part of its protein substrates and unfolds these before they are guided to HslV for hydrolysis. In Thermotoga sp. (strain RQ2), this protein is ATP-dependent protease ATPase subunit HslU.